Consider the following 595-residue polypeptide: Adenine deaminase 2 (595 aa).

Belongs to the metallo-dependent hydrolases superfamily. Adenine deaminase family. Requires Mn(2+) as cofactor.

It carries out the reaction adenine + H2O + H(+) = hypoxanthine + NH4(+). This Rhizobium johnstonii (strain DSM 114642 / LMG 32736 / 3841) (Rhizobium leguminosarum bv. viciae) protein is Adenine deaminase 2.